The chain runs to 347 residues: NADH-ubiquinone oxidoreductase chain 2 (347 aa).

Helical transmembrane passes span 1–21, 25–45, 68–88, 96–116, 122–142, 145–165, 178–198, 201–221, 239–259, 274–294, and 326–346; these read MNPM…SIVL, HWFL…PVLM, MILV…TIMI, MLIT…FWVP, VSLS…LSLL, IFPS…IMIG, IMAY…IYNP, SLLN…LLII, IVVS…PLTG, SSVM…FFYM, and MMSL…LITL.

The protein belongs to the complex I subunit 2 family. As to quaternary structure, core subunit of respiratory chain NADH dehydrogenase (Complex I) which is composed of 45 different subunits. Interacts with TMEM242.

Its subcellular location is the mitochondrion inner membrane. The enzyme catalyses a ubiquinone + NADH + 5 H(+)(in) = a ubiquinol + NAD(+) + 4 H(+)(out). Its function is as follows. Core subunit of the mitochondrial membrane respiratory chain NADH dehydrogenase (Complex I) which catalyzes electron transfer from NADH through the respiratory chain, using ubiquinone as an electron acceptor. Essential for the catalytic activity and assembly of complex I. The polypeptide is NADH-ubiquinone oxidoreductase chain 2 (Sylvisorex lunaris (Moon forest shrew)).